Reading from the N-terminus, the 333-residue chain is Biotin synthase (333 aa).

The Radical SAM core domain maps to 40 to 269 (YRVQLASLLS…HARVRLSAGR (230 aa)). Positions 55, 59, and 62 each coordinate [4Fe-4S] cluster. The [2Fe-2S] cluster site is built by Cys-100, Cys-132, Cys-192, and Arg-264.

This sequence belongs to the radical SAM superfamily. Biotin synthase family. As to quaternary structure, homodimer. The cofactor is [4Fe-4S] cluster. [2Fe-2S] cluster is required as a cofactor.

The enzyme catalyses (4R,5S)-dethiobiotin + (sulfur carrier)-SH + 2 reduced [2Fe-2S]-[ferredoxin] + 2 S-adenosyl-L-methionine = (sulfur carrier)-H + biotin + 2 5'-deoxyadenosine + 2 L-methionine + 2 oxidized [2Fe-2S]-[ferredoxin]. The protein operates within cofactor biosynthesis; biotin biosynthesis; biotin from 7,8-diaminononanoate: step 2/2. In terms of biological role, catalyzes the conversion of dethiobiotin (DTB) to biotin by the insertion of a sulfur atom into dethiobiotin via a radical-based mechanism. This chain is Biotin synthase, found in Synechococcus sp. (strain CC9902).